Consider the following 61-residue polypeptide: Small ribosomal subunit protein uS14 (61 aa).

The Zn(2+) site is built by Cys24, Cys27, Cys40, and Cys43.

It belongs to the universal ribosomal protein uS14 family. Zinc-binding uS14 subfamily. As to quaternary structure, part of the 30S ribosomal subunit. Contacts proteins S3 and S10. It depends on Zn(2+) as a cofactor.

Its function is as follows. Binds 16S rRNA, required for the assembly of 30S particles and may also be responsible for determining the conformation of the 16S rRNA at the A site. The protein is Small ribosomal subunit protein uS14 of Mycoplasma pneumoniae (strain ATCC 29342 / M129 / Subtype 1) (Mycoplasmoides pneumoniae).